Reading from the N-terminus, the 55-residue chain is MDIPALSVAMHQASLAQNVNIALTKKRLDTAQQNADQTLKMIQHPTLGQTIDVKA.

Residues 17-44 adopt a coiled-coil conformation; that stretch reads QNVNIALTKKRLDTAQQNADQTLKMIQH.

This is an uncharacterized protein from Bacillus subtilis (strain 168).